The chain runs to 107 residues: Guanylate cyclase activator 2B (107 aa).

The signal sequence occupies residues 1–21; sequence MSGSQLWAAVVVLLLLQSAQG. Positions 22–92 are excised as a propeptide; it reads VYIKYHGFQV…STFKALRTIA (71 aa). 3 disulfides stabilise this stretch: cysteine 63–cysteine 76, cysteine 96–cysteine 104, and cysteine 99–cysteine 107.

The protein belongs to the guanylin family.

The protein localises to the secreted. In terms of biological role, endogenous activator of intestinal guanylate cyclase. It stimulates this enzyme through the same receptor binding region as the heat-stable enterotoxins. May be a potent physiological regulator of intestinal fluid and electrolyte transport. May be an autocrine/paracrine regulator of intestinal salt and water transport. This is Guanylate cyclase activator 2B (GUCA2B) from Notomys alexis (Spinifex hopping mouse).